We begin with the raw amino-acid sequence, 255 residues long: Pimeloyl-[acyl-carrier protein] methyl ester esterase (255 aa).

Positions L16–E241 constitute an AB hydrolase-1 domain. Residues W22, S82–L83, and F143–Q147 contribute to the substrate site. The Nucleophile role is filled by S82. Residues D207 and H235 contribute to the active site. A substrate-binding site is contributed by H235.

It belongs to the AB hydrolase superfamily. Carboxylesterase BioH family. Monomer.

The protein localises to the cytoplasm. It catalyses the reaction 6-carboxyhexanoyl-[ACP] methyl ester + H2O = 6-carboxyhexanoyl-[ACP] + methanol + H(+). It functions in the pathway cofactor biosynthesis; biotin biosynthesis. In terms of biological role, the physiological role of BioH is to remove the methyl group introduced by BioC when the pimeloyl moiety is complete. It allows to synthesize pimeloyl-ACP via the fatty acid synthetic pathway through the hydrolysis of the ester bonds of pimeloyl-ACP esters. The polypeptide is Pimeloyl-[acyl-carrier protein] methyl ester esterase (Vibrio parahaemolyticus serotype O3:K6 (strain RIMD 2210633)).